The chain runs to 426 residues: MASAKEISQYLKRFSQLDAKRFAVVKVGGAVLRDDLEALTSSLSFLQEVGLTPIVLHGAGPQLDAELSAAGIEKQTVNGLRVTSPHALAIVRKVFQASNLKLVEALQQNGARATSITGGVFEAEYLNRDTYGLVGEVKAVNLAPIEASLQAGSIPVITSLGETPSGQILNVNADFAANELVQELQPYKIIFLTGTGGLLDAEGKLIDSINLSTEYDHLMQQPWINGGMRVKIEQIKDLLDRLPLESSVSITRPADLAKELFTHKGSGTLVRRGERVLRATSWDELDLPRLTSLIESSFGRTLVPDYFSNTKLLRAYVSENYRAAVILTDEGMLGASALIYLDKFAVLDDAQGEGLGRAVWNVMREETPQLFWRSRHNNQVNIFYYAESDGCIKQEKWKVFWYGLENFEQIQHCVAHCATRQPTLLG.

The segment at 1–252 (MASAKEISQY…PLESSVSITR (252 aa)) is acetylglutamate kinase. Substrate-binding positions include 59 to 60 (AG), R81, and N170. The interval 253–426 (PADLAKELFT…CATRQPTLLG (174 aa)) is unknown. One can recognise an N-acetyltransferase domain in the interval 274–425 (ERVLRATSWD…HCATRQPTLL (152 aa)).

The protein in the N-terminal section; belongs to the acetylglutamate kinase family. ArgB subfamily.

The protein localises to the cytoplasm. It catalyses the reaction N-acetyl-L-glutamate + ATP = N-acetyl-L-glutamyl 5-phosphate + ADP. Its pathway is amino-acid biosynthesis; L-arginine biosynthesis; N(2)-acetyl-L-ornithine from L-glutamate: step 2/4. The chain is Acetylglutamate kinase (argB) from Xanthomonas campestris pv. campestris (strain ATCC 33913 / DSM 3586 / NCPPB 528 / LMG 568 / P 25).